Consider the following 291-residue polypeptide: Acetylglutamate kinase (291 aa).

Residues 61–62 (GG), R83, and N187 contribute to the substrate site.

The protein belongs to the acetylglutamate kinase family. ArgB subfamily.

The protein localises to the cytoplasm. It catalyses the reaction N-acetyl-L-glutamate + ATP = N-acetyl-L-glutamyl 5-phosphate + ADP. The protein operates within amino-acid biosynthesis; L-arginine biosynthesis; N(2)-acetyl-L-ornithine from L-glutamate: step 2/4. Catalyzes the ATP-dependent phosphorylation of N-acetyl-L-glutamate. The protein is Acetylglutamate kinase of Methanoregula boonei (strain DSM 21154 / JCM 14090 / 6A8).